Here is a 293-residue protein sequence, read N- to C-terminus: SAGA-associated factor 29 (293 aa).

Residues 12 to 88 (ELLAELQRLL…KALDKIAEIK (77 aa)) are a coiled coil. Residues 152 to 293 (GDYVAKPGDK…VVACKETKKK (142 aa)) enclose the SGF29 C-terminal domain. Histone H3K4me3 N-terminus binding stretches follow at residues 194 to 196 (DID) and 240 to 243 (QTTC). A histone H3K4me3 binding region spans residues 264–266 (FED).

Belongs to the SGF29 family. Interacts with dimethylated and trimethylated 'Lys-4' of histone H3 (H3K4me2 and H3K4me3), with a preference for the trimethylated form (H3K4me3). Component of some SAGA-type complexes. Component of the ADA2A-containing complex (ATAC).

The protein resides in the nucleus. Chromatin reader component of some histone acetyltransferase (HAT) SAGA-type complexes like the TFTC-HAT, ATAC or STAGA complexes. SGF29 specifically recognizes and binds methylated 'Lys-4' of histone H3 (H3K4me), with a preference for trimethylated form (H3K4me3). In the SAGA-type complexes, SGF29 is required to recruit complexes to H3K4me. Also binds non-histone proteins that are methylated on Lys residues. The chain is SAGA-associated factor 29 from Gallus gallus (Chicken).